We begin with the raw amino-acid sequence, 339 residues long: DNA repair protein RAD51 homolog 1 (339 aa).

A disordered region spans residues 1 to 23 (MAMQVQFEASTDTSAEEESFGPE). In terms of domain architecture, HhH spans 48–77 (TVESVAHAPKKELLNIKGISEAKADKILAE). An ATP-binding site is contributed by 127–134 (GEFRTGKT).

This sequence belongs to the RecA family. RAD51 subfamily. As to quaternary structure, forms linear homooligomers, giving rise to a RAD51 nucleoprotein filament, which is essential for strand-pairing reactions during DNA recombination. In terms of tissue distribution, expressed at high levels in lymphoid and reproductive organs.

It is found in the nucleus. Its subcellular location is the cytoplasm. It localises to the chromosome. Plays an important role in homologous strand exchange, a key step in DNA repair through homologous recombination (HR). Binds to single-stranded DNA in an ATP-dependent manner to form nucleoprotein filaments which are essential for the homology search and strand exchange. Catalyzes the recognition of homology and strand exchange between homologous DNA partners to form a joint molecule between a processed DNA break and the repair template. Recruited to resolve stalled replication forks during replication stress. Also involved in interstrand cross-link repair. The chain is DNA repair protein RAD51 homolog 1 (RAD51A) from Gallus gallus (Chicken).